Here is a 204-residue protein sequence, read N- to C-terminus: uncharacterized protein (204 aa).

An N-terminal signal peptide occupies residues 1 to 16 (MKYTFLAVLSAVTVLA).

It localises to the secreted. This is an uncharacterized protein from Arthroderma benhamiae (strain ATCC MYA-4681 / CBS 112371) (Trichophyton mentagrophytes).